The following is a 201-amino-acid chain: IMP cyclohydrolase (201 aa).

It belongs to the archaeal IMP cyclohydrolase family.

The enzyme catalyses IMP + H2O = 5-formamido-1-(5-phospho-D-ribosyl)imidazole-4-carboxamide. The protein operates within purine metabolism; IMP biosynthesis via de novo pathway; IMP from 5-formamido-1-(5-phospho-D-ribosyl)imidazole-4-carboxamide: step 1/1. Its function is as follows. Catalyzes the cyclization of 5-formylamidoimidazole-4-carboxamide ribonucleotide to IMP. The protein is IMP cyclohydrolase of Methanocella arvoryzae (strain DSM 22066 / NBRC 105507 / MRE50).